A 590-amino-acid chain; its full sequence is Multidrug resistance-like ATP-binding protein MdlA (590 aa).

Residues 18-303 (YLGAVALLVI…LAWMFNIVER (286 aa)) form the ABC transmembrane type-1 domain. 6 helical membrane-spanning segments follow: residues 23–43 (ALLV…GIVV), 53–73 (TGQI…VYLL), 134–154 (GVLT…MMST), 155–175 (QISW…AIMI), 248–268 (IYIA…WMVV), and 280–300 (FMMY…MFNI). The ABC transporter domain maps to 337–570 (VNIHQFTYPQ…SGWYRDMYRY (234 aa)). Position 369 to 376 (369 to 376 (GPTGSGKS)) interacts with ATP.

It belongs to the ABC transporter superfamily. Drug exporter-2 (TC 3.A.1.117) family.

It localises to the cell inner membrane. It catalyses the reaction ATP + H2O + xenobioticSide 1 = ADP + phosphate + xenobioticSide 2.. The protein is Multidrug resistance-like ATP-binding protein MdlA (mdlA) of Escherichia coli (strain K12).